The chain runs to 467 residues: MNGQKDVVQVSEAWQTLSTYLPPVTADRDYWWQLTGRHVAALVEAAGYPIEKQYEALIFHYHWTVPYMGPAPKADGTPATWKSLLGLDGSPIEYSWKWNTTRSEPDVRYVTEPIGQHPGSHLDPLNQHALRELLQRFSKNMPSSDMNMSWVNHFFARLYDHDNTRYIQEAAAGSSRSTATSVQLGTEFLRRGIGFKTYFFPRKLGQVDDISISQYGASMSQLDVDETSWDARKALVEFLETNPEGKSLRPFSLAVDNVAPSQSRLKWYFHTLHTSIDSVREIMTLGGRINGIDKQLEELEDLIRVVAGLASDFPTNAEIPLPKKSDVYDQSAKDNFGELEDVLTGYLYYFDIAPGQGKLPEVKWFIPSRHYGPNDRELASALGAWMEARGRGAYNEPYMKMLHTLSAHRGLGDGKGLQTFISCLFKPSGDLDITTYLGAEAFHPGRVAKMAKPNGRSPRATLRRGDD.

L-tryptophan is bound at residue glutamate 93. Dimethylallyl diphosphate is bound by residues arginine 108, lysine 196, tyrosine 198, lysine 266, tyrosine 268, and tyrosine 436.

It belongs to the tryptophan dimethylallyltransferase family.

It participates in secondary metabolite biosynthesis. Prenyltransferase; part of the gene cluster that mediates the biosynthesis of dibenzodioxocinones such as pestalotiollide B, a novel class of inhibitors against cholesterol ester transfer protein (CEPT). The biosynthesis initiates from condensation of acetate and malonate units catalyzed by the non-reducing PKS pks8/GME11356. Pks8/GME11356 lacks a thioesterase (TE) domain, which is important to the cyclizing of the third ring of atrochrysone carboxylic acid, and the esterase GME11355 might play the role of TE and catalyzes the cyclization reaction of the C ring. The lactamase-like protein GME11357 (or other beta-lactamases in Pestalotiopsis microspora) probably hydrolyzes the thioester bond between the ACP of pks8/GME11356 and the intermediate to release atrochrysone carboxylic acid, which is spontaneously dehydrates to form endocrocin anthrone. Endocrocin anthrone is further converted to emodin via the endocrocin intermediate. Emodin is then oxidized by several enzymes such as the Baeyer-Villiger oxidase GME11358, the oxidoreductase GME11367, the short chain dehydrogenase/reductase GME11373, as well as by other oxidoreductases from the cluster, to modify the A and C rings and open the B ring, and finally yield monodictyphenone. The prenyltransferase GME11375 may catalyze the addition reaction between the C5 side chains and the carbon bone of dibenzodioxocinones. The remaining biochemical reactions to the final product dibenzodioxocinones should be methylation catalyzed by methyltransferase GME11366 and reduction and lactonization reaction catalyzed by a series of oxidordeuctases. This is Prenyltransferase GME11375 from Pestalotiopsis microspora.